A 393-amino-acid polypeptide reads, in one-letter code: Uroporphyrinogen decarboxylase, chloroplastic (393 aa).

The segment at 1-64 is disordered; the sequence is MATACPPLSL…AGERNQREEV (64 aa). The segment covering 23-37 has biased composition (low complexity); the sequence is AGPNAGSSRPSAAAP. Basic and acidic residues predominate over residues 38–50; sequence SERRSWRRPRPDG. Residues 73-77, phenylalanine 92, serine 122, aspartate 123, tyrosine 200, serine 255, and histidine 370 each bind substrate; that span reads RQAGR.

It belongs to the uroporphyrinogen decarboxylase family. In terms of assembly, homodimer.

It is found in the plastid. The protein localises to the chloroplast. The enzyme catalyses uroporphyrinogen III + 4 H(+) = coproporphyrinogen III + 4 CO2. It participates in porphyrin-containing compound metabolism; protoporphyrin-IX biosynthesis; coproporphyrinogen-III from 5-aminolevulinate: step 4/4. In terms of biological role, catalyzes the decarboxylation of four acetate groups of uroporphyrinogen-III to yield coproporphyrinogen-III. This is Uroporphyrinogen decarboxylase, chloroplastic (LES22) from Zea mays (Maize).